The chain runs to 435 residues: Serine--tRNA ligase (435 aa).

T242–E244 is a binding site for L-serine. An ATP-binding site is contributed by R273–E275. E296 contacts L-serine. ATP is bound at residue E360–S363. S396 contributes to the L-serine binding site.

It belongs to the class-II aminoacyl-tRNA synthetase family. Type-1 seryl-tRNA synthetase subfamily. In terms of assembly, homodimer. The tRNA molecule binds across the dimer.

The protein localises to the cytoplasm. It catalyses the reaction tRNA(Ser) + L-serine + ATP = L-seryl-tRNA(Ser) + AMP + diphosphate + H(+). The enzyme catalyses tRNA(Sec) + L-serine + ATP = L-seryl-tRNA(Sec) + AMP + diphosphate + H(+). It functions in the pathway aminoacyl-tRNA biosynthesis; selenocysteinyl-tRNA(Sec) biosynthesis; L-seryl-tRNA(Sec) from L-serine and tRNA(Sec): step 1/1. Functionally, catalyzes the attachment of serine to tRNA(Ser). Is also able to aminoacylate tRNA(Sec) with serine, to form the misacylated tRNA L-seryl-tRNA(Sec), which will be further converted into selenocysteinyl-tRNA(Sec). In Vibrio cholerae serotype O1 (strain ATCC 39541 / Classical Ogawa 395 / O395), this protein is Serine--tRNA ligase.